The following is an 804-amino-acid chain: MAKSSSLNVRVVEGRALPAKDVSGSSDPYCLVKVDDEVVARTATVWRSLGPFWGEEYTVHLPLDFHQLAFYVLDEDTVGHDDIIGKISLSREAITADPRGIDSWINLSRVDPDAEVQGEICLSVQMLEDGQGRCLRCHVLQARDLAPRDISGTSDPFARVFWGSQSLETSTIKKTRFPHWDEVLELREMPGAPSPLRVELWDWDMVGKNDFLGMVEFSPKTLQQKPPKGWFRLLPFPRAEEDSGGNLGALRVKVRLIEDRVLPSQCYQPLMELLMESVQGPAEEDTASPLALLEELTLGDCRQDLATKLVKLFLGRGLAGRFLDYLTRREVARTMDPNTLFRSNSLASKSMEQFMKLVGMPYLHEVLKPVISRVFEEKKYMELDPCKMDLGRTRRISFKGALSEEQMRETSLGLLTGYLGPIVDAIVGSVGRCPPAMRLAFKQLHRRVEERFPQAEHQDVKYLAISGFLFLRFFAPAILTPKLFDLRDQHADPQTSRSLLLLAKAVQSIGNLGQQLGQGKELWMAPLHPFLLQCVSRVRDFLDRLVDVDGDEAGVPARALFPPSAIVREGYLLKRKEEPAGLATRFAFKKRYVWLSGETLSFSKSPEWQMCHSIPVSHIRAVERVDEGAFQLPHVMQVVTQDGTGALHTTYLQCKNVNELNQWLSALRKASAPNPNKLAACHPGAFRSARWTCCLQAERSAAGCSRTHSAVTLGDWSDPLDPDAEAQTVYRQLLLGRDQLRLKLLEDSNMDTTLEADTGACPEVLARQRAATARLLEVLADLDRAHEEFQQQERGKAALGPLGP.

C2 domains follow at residues 1 to 105 (MAKS…DSWI) and 116 to 231 (VQGE…KGWF). Aspartate 21, aspartate 27, aspartate 74, aspartate 76, aspartate 82, aspartate 149, aspartate 155, aspartate 202, aspartate 204, and aspartate 210 together coordinate Ca(2+). The region spanning 317-545 (GLAGRFLDYL…SRVRDFLDRL (229 aa)) is the Ras-GAP domain. The 108-residue stretch at 565 to 672 (AIVREGYLLK…WLSALRKASA (108 aa)) folds into the PH domain. Residues 674–710 (NPNKLAACHPGAFRSARWTCCLQAERSAAGCSRTHSA) form a Btk-type zinc finger. Zn(2+) is bound by residues histidine 682, cysteine 693, cysteine 694, and cysteine 704.

The cofactor is Ca(2+). Highly expressed in thyroid and adrenal medulla, lower expression in brain, spinal cord and trachea. Expressed in melanocytes.

In terms of biological role, probable inhibitory regulator of the Ras-cyclic AMP pathway. Plays a role in dendrite formation by melanocytes. In Homo sapiens (Human), this protein is RasGAP-activating-like protein 1.